Here is a 246-residue protein sequence, read N- to C-terminus: TATA-box-binding protein (246 aa).

The interval 1-27 is disordered; that stretch reads MSSDKTSQQTFKLAPNNSVAQSNSIDQ. 2 consecutive repeat copies span residues 53-129 and 143-220.

The protein belongs to the TBP family. In terms of assembly, belongs to the TFIID complex together with the TBP-associated factors (TAFs). Binds DNA as monomer.

It is found in the nucleus. In terms of biological role, general transcription factor that functions at the core of the DNA-binding multiprotein factor TFIID. Binding of TFIID to the TATA box is the initial transcriptional step of the pre-initiation complex (PIC), playing a role in the activation of eukaryotic genes transcribed by RNA polymerase II. The protein is TATA-box-binding protein of Tetrahymena thermophila.